A 407-amino-acid polypeptide reads, in one-letter code: Large ribosomal subunit protein uL3-like (407 aa).

Residues 1–31 are compositionally biased toward basic residues; the sequence is MSHRKFSAPRHGHLGFLPHKRSHRHRGKVKT. Disordered stretches follow at residues 1–35 and 383–407; these read MSHRKFSAPRHGHLGFLPHKRSHRHRGKVKTWPRD and QEKRAFMGPQKKHLEKEKPETSGDL. Basic and acidic residues predominate over residues 394 to 407; it reads KHLEKEKPETSGDL.

It belongs to the universal ribosomal protein uL3 family. Component of the large ribosomal subunit in striated muscle cells.

Its function is as follows. Heart- and skeletal muscle-specific component of the ribosome, which regulates muscle function. Component of the large ribosomal subunit in striated muscle cells: replaces the RPL3 paralog in the ribosome in these cells. The ribosome is a large ribonucleoprotein complex responsible for the synthesis of proteins in the cell. Inhibits myotube growth and muscle function. This chain is Large ribosomal subunit protein uL3-like (RPL3L), found in Bos taurus (Bovine).